A 67-amino-acid polypeptide reads, in one-letter code: Large ribosomal subunit protein eL24 (67 aa).

Positions 7, 10, 33, and 37 each coordinate Zn(2+). Residues 7 to 37 (CDYCGTDIEPGTGTMFVHKDGATTHFCSSKC) form a C4-type zinc finger. Positions 48-60 (RNLEWTDTARGEA) are enriched in basic and acidic residues. The interval 48-67 (RNLEWTDTARGEAGEAEDEA) is disordered.

This sequence belongs to the eukaryotic ribosomal protein eL24 family. In terms of assembly, part of the 50S ribosomal subunit. Forms a cluster with proteins L3 and L14. It depends on Zn(2+) as a cofactor.

Functionally, binds to the 23S rRNA. The polypeptide is Large ribosomal subunit protein eL24 (rpl24e) (Haloarcula marismortui (strain ATCC 43049 / DSM 3752 / JCM 8966 / VKM B-1809) (Halobacterium marismortui)).